Reading from the N-terminus, the 156-residue chain is Ribosome maturation factor RimP (156 aa).

The protein belongs to the RimP family.

It is found in the cytoplasm. In terms of biological role, required for maturation of 30S ribosomal subunits. The chain is Ribosome maturation factor RimP from Bacillus velezensis (strain DSM 23117 / BGSC 10A6 / LMG 26770 / FZB42) (Bacillus amyloliquefaciens subsp. plantarum).